Consider the following 132-residue polypeptide: Aspartate 1-decarboxylase (132 aa).

Serine 25 acts as the Schiff-base intermediate with substrate; via pyruvic acid in catalysis. Serine 25 is subject to Pyruvic acid (Ser). Threonine 57 contacts substrate. Tyrosine 58 serves as the catalytic Proton donor. Residue 73–75 participates in substrate binding; that stretch reads GAA.

It belongs to the PanD family. Heterooctamer of four alpha and four beta subunits. The cofactor is pyruvate. Is synthesized initially as an inactive proenzyme, which is activated by self-cleavage at a specific serine bond to produce a beta-subunit with a hydroxyl group at its C-terminus and an alpha-subunit with a pyruvoyl group at its N-terminus.

It localises to the cytoplasm. It catalyses the reaction L-aspartate + H(+) = beta-alanine + CO2. It functions in the pathway cofactor biosynthesis; (R)-pantothenate biosynthesis; beta-alanine from L-aspartate: step 1/1. Functionally, catalyzes the pyruvoyl-dependent decarboxylation of aspartate to produce beta-alanine. This Heliobacterium modesticaldum (strain ATCC 51547 / Ice1) protein is Aspartate 1-decarboxylase.